The following is a 357-amino-acid chain: Putative lipopolysaccharide heptosyltransferase 4 (357 aa).

The catalysed reaction is alpha-D-Glc-(1-&gt;2)-alpha-D-Glc-(1-&gt;3)-[alpha-D-Gal-(1-&gt;6)]-alpha-D-Glc-(1-&gt;3)-[L-alpha-D-Hep-(1-&gt;7)]-4-O-PO3(2-)-L-alpha-D-Hep-(1-&gt;3)-4-O-PO3(2-)-L-alpha-D-Hep-(1-&gt;5)-[alpha-Kdo-(2-&gt;4)]-alpha-Kdo-(2-&gt;6)-lipid A + ADP-L-glycero-beta-D-manno-heptose = lipid A-core + ADP + H(+). It participates in bacterial outer membrane biogenesis; LPS core biosynthesis. In terms of biological role, transferase involved in the biosynthesis of the core oligosaccharide region of lipopolysaccharide (LPS). May catalyze the addition of the terminal heptose (heptose IV) to the outer-core glucose III, the last step of the lipid A-core oligosaccharide biosynthesis. The protein is Putative lipopolysaccharide heptosyltransferase 4 of Escherichia coli (strain K12).